The primary structure comprises 477 residues: Otoconin-90 (477 aa).

Residues Met-1–Gly-17 form the signal peptide. Asn-38 carries N-linked (GlcNAc...) asparagine glycosylation. Phospholipase A2-like regions lie at residues Leu-76–Cys-190, Met-305–Cys-361, and Cys-373–Cys-425. 7 disulfides stabilise this stretch: Cys-85–Cys-145, Cys-99–Cys-190, Cys-101–Cys-117, Cys-116–Cys-172, Cys-123–Cys-165, Cys-132–Cys-158, and Cys-152–Cys-163. Asn-179 is a glycosylation site (N-linked (GlcNAc...) asparagine). N-linked (GlcNAc...) asparagine glycosylation occurs at Asn-407. Residues Ser-428–Arg-477 are disordered. The span at Ser-442–Gln-452 shows a compositional bias: acidic residues.

This sequence belongs to the phospholipase A2 family. As to quaternary structure, interacts with OTOL1.

It localises to the secreted. Functionally, major protein of the otoconia, a calcium carbonate structure in the saccule and utricle of the ear. Together with OTOL1, acts as a scaffold for otoconia biomineralization: sequesters calcium and forms interconnecting fibrils between otoconia that are incorporated into the calcium crystal structure. Together with OTOL1, modulates calcite crystal morphology and growth kinetics. It is unlikely that this protein has phospholipase A2 activity. The protein is Otoconin-90 of Homo sapiens (Human).